We begin with the raw amino-acid sequence, 133 residues long: ATP synthase epsilon chain (133 aa).

Belongs to the ATPase epsilon chain family. F-type ATPases have 2 components, CF(1) - the catalytic core - and CF(0) - the membrane proton channel. CF(1) has five subunits: alpha(3), beta(3), gamma(1), delta(1), epsilon(1). CF(0) has three main subunits: a, b and c.

Its subcellular location is the cell membrane. Its function is as follows. Produces ATP from ADP in the presence of a proton gradient across the membrane. The chain is ATP synthase epsilon chain from Bacillus anthracis (strain A0248).